The sequence spans 69 residues: Putative antitoxin AF_1481 (69 aa).

Belongs to the UPF0330 family.

In terms of biological role, possibly the antitoxin component of a type II toxin-antitoxin (TA) system. The protein is Putative antitoxin AF_1481 of Archaeoglobus fulgidus (strain ATCC 49558 / DSM 4304 / JCM 9628 / NBRC 100126 / VC-16).